We begin with the raw amino-acid sequence, 273 residues long: Outer surface protein A (273 aa).

The signal sequence occupies residues 1–16; the sequence is MKKYLLGIGLILALIA. Residue Cys-17 is the site of N-palmitoyl cysteine attachment. Cys-17 is lipidated: S-diacylglycerol cysteine.

It belongs to the OspA lipoprotein family.

It localises to the cell outer membrane. Its subcellular location is the cell surface. This chain is Outer surface protein A, found in Borreliella burgdorferi (Lyme disease spirochete).